A 4128-amino-acid chain; its full sequence is DNA-dependent protein kinase catalytic subunit (4128 aa).

At lysine 117 the chain carries N6-acetyllysine. One copy of the HEAT 1 repeat lies at 288–323 (DNYITLFEVLSKWCSHTNVELKKAAHSALESFLRQI). Residues serine 511, serine 686, serine 840, and serine 891 each carry the phosphoserine modification. 2 HEAT repeats span residues 1001–1037 (QDTV…LKWS) and 1050–1086 (PVNS…YKEF). Serine 1062 is subject to Phosphoserine. Residue lysine 1206 is modified to N6-acetyllysine. An interaction with C1D region spans residues 1501-1536 (LDPSCKSLANGLLELAFGFGGLCDHLVSLLLNSAML). The tract at residues 1501 to 1536 (LDPSCKSLANGLLELAFGFGGLCDHLVSLLLNSAML) is leucine-zipper. Residues 1720–1753 (PMKSDEFPPDSLKYNNYVDCMKKFLDALELSQSP) form a TPR 1 repeat. An N6-acetyllysine modification is found at lysine 1967. The tract at residues 2049–2071 (YSYSSQDRKPTTGHFQRREHQDS) is disordered. Serine 2053 is modified (phosphoserine; by autocatalysis). The span at 2054–2070 (QDRKPTTGHFQRREHQD) shows a compositional bias: basic and acidic residues. Lysine 2255 carries the post-translational modification N6-acetyllysine. The interval 2432–3213 (LDIVYKMVAK…DHSMSVDEDE (782 aa)) is KIP-binding. Threonine 2531 carries the phosphothreonine modification. Position 2605 is a phosphothreonine; by autocatalysis (threonine 2605). Residue serine 2608 is modified to Phosphoserine; by autocatalysis. The disordered stretch occupies residues 2614-2635 (TQTQEGPLSDQRQKPGQVRATQ). Phosphothreonine; by autocatalysis occurs at positions 2634 and 2643. Residues 2738 to 2766 (EKLSLLYAKRGLMEQKLEKDIKSEFKMKQ) are may split the end of the DNA molecule, with the two strands separating around the region. The FAT domain maps to 2907–3539 (PTKRVRGKTC…IYPFIISSES (633 aa)). TPR repeat units lie at residues 2921–2954 (VLRW…TQDT) and 2956–2983 (NALL…LEWV). A Phosphoserine modification is found at serine 3206. An N6-acetyllysine mark is found at lysine 3241, lysine 3260, lysine 3638, and lysine 3642. The 332-residue stretch at 3722-4053 (FDERVKVMLS…IRYAKRKLAG (332 aa)) folds into the PI3K/PI4K catalytic domain. The segment at 3728–3734 (VMLSLRK) is G-loop. A phosphoserine mark is found at serine 3731 and serine 3821. The catalytic loop stretch occupies residues 3919-3927 (GIGDRHLNN). The segment at 3939–3964 (GIDFGHAFGSATQFLPVPELMPFRLT) is activation loop. Serine 4026 carries the phosphoserine modification. Residues 4096-4128 (SGLSEETQVKCLVDQATDPNILGRTWEGWEPWM) enclose the FATC domain.

The protein belongs to the PI3/PI4-kinase family. As to quaternary structure, DNA-PK is a heterotrimer of PRKDC and the Ku dimer (composed of XRCC6/Ku70 and XRCC5/Ku86). Formation of this complex may be promoted by interaction with ILF3. Component of the core long-range non-homologous end joining (NHEJ) complex (also named DNA-PK complex) composed of PRKDC, LIG4, XRCC4, XRCC6/Ku70, XRCC5/Ku86 and NHEJ1/XLF. Additional component of the NHEJ complex includes PAXX. Following autophosphorylation, PRKDC dissociates from DNA. Interacts with DNA-PKcs-interacting protein (KIP) with the region upstream the kinase domain. PRKDC alone also interacts with and phosphorylates DCLRE1C, thereby activating the latent endonuclease activity of this protein. Interacts with C1D. Interacts with TTI1 and TELO2. Interacts with CIB1. Interacts with SETX. Interacts with NR4A3; the DNA-dependent protein kinase complex DNA-PK phosphorylates and activates NR4A3 and prevents NR4A3 ubiquitination and degradation. Interacts with BRAT1. Part of the HDP-RNP complex composed of at least HEXIM1, PRKDC, XRCC5, XRCC6, paraspeckle proteins (SFPQ, NONO, PSPC1, RBM14, and MATR3) and NEAT1 RNA. Interacts with KAT5. Post-translationally, autophosphorylated at two clusters, the T2609 cluster and the S2056 cluster. Autophosphorylated on Ser-2053, Thr-2605, Thr-2634 and Thr-2643. Ser-2053 and Thr-2605 are DNA damage-inducible phosphorylation sites (inducible with ionizing radiation, IR) dephosphorylated by PPP5C. Autophosphorylation induces a conformational change that leads to remodeling of the DNA-PK complex, requisite for efficient end processing and DNA repair. Autophosphorylation in trans within DNA-PK complexes loaded on DNA ends leads to the dissociation of PRKDC from DNA and the transition into the short-range NHEJ complex. Autophosphorylation of the T2609 cluster is required for hematopoietic development and protein synthesis in erythrocytes precursors. S-nitrosylated by GAPDH. In terms of processing, polyubiquitinated by RNF144A, leading to proteasomal degradation.

It is found in the nucleus. The protein localises to the nucleolus. It localises to the cytoplasm. Its subcellular location is the cytosol. It carries out the reaction L-seryl-[protein] + ATP = O-phospho-L-seryl-[protein] + ADP + H(+). The enzyme catalyses L-threonyl-[protein] + ATP = O-phospho-L-threonyl-[protein] + ADP + H(+). Its activity is regulated as follows. Activity seems to be attenuated by autophosphorylation. Binding to the SL1 region of U3 small nucleolar RNA promotes auto-phosphorylation activity. Inhibited by wortmannin. Functionally, serine/threonine-protein kinase that acts as a molecular sensor for DNA damage. Involved in DNA non-homologous end joining (NHEJ) required for double-strand break (DSB) repair and V(D)J recombination. Must be bound to DNA to express its catalytic properties. Promotes processing of hairpin DNA structures in V(D)J recombination by activation of the hairpin endonuclease artemis (DCLRE1C). Recruited by XRCC5 and XRCC6 to DNA ends and is required to (1) protect and align broken ends of DNA, thereby preventing their degradation, (2) and sequester the DSB for repair by NHEJ. Acts as a scaffold protein to aid the localization of DNA repair proteins to the site of damage. The assembly of the DNA-PK complex at DNA ends is also required for the NHEJ ligation step. Found at the ends of chromosomes, suggesting a further role in the maintenance of telomeric stability and the prevention of chromosomal end fusion. Also involved in modulation of transcription. As part of the DNA-PK complex, involved in the early steps of ribosome assembly by promoting the processing of precursor rRNA into mature 18S rRNA in the small-subunit processome. Binding to U3 small nucleolar RNA, recruits PRKDC and XRCC5/Ku86 to the small-subunit processome. Recognizes the substrate consensus sequence [ST]-Q. Phosphorylates 'Ser-139' of histone variant H2AX, thereby regulating DNA damage response mechanism. Phosphorylates ASF1A, DCLRE1C, c-Abl/ABL1, histone H1, HSPCA, c-jun/JUN, p53/TP53, PARP1, POU2F1, DHX9, FH, SRF, NHEJ1/XLF, XRCC1, XRCC4, XRCC5, XRCC6, WRN, MYC and RFA2. Can phosphorylate C1D not only in the presence of linear DNA but also in the presence of supercoiled DNA. Ability to phosphorylate p53/TP53 in the presence of supercoiled DNA is dependent on C1D. Acts as a regulator of the phosphatidylinositol 3-kinase/protein kinase B signal transduction by mediating phosphorylation of 'Ser-473' of protein kinase B (PKB/AKT1, PKB/AKT2, PKB/AKT3), promoting their activation. Contributes to the determination of the circadian period length by antagonizing phosphorylation of CRY1 'Ser-588' and increasing CRY1 protein stability, most likely through an indirect mechanism. Plays a role in the regulation of DNA virus-mediated innate immune response by assembling into the HDP-RNP complex, a complex that serves as a platform for IRF3 phosphorylation and subsequent innate immune response activation through the cGAS-STING pathway. Also regulates the cGAS-STING pathway by catalyzing phosphorylation of CGAS, thereby impairing CGAS oligomerization and activation. Also regulates the cGAS-STING pathway by mediating phosphorylation of PARP1. The sequence is that of DNA-dependent protein kinase catalytic subunit (Prkdc) from Mus musculus (Mouse).